The following is a 451-amino-acid chain: Macrophage scavenger receptor types I and II (451 aa).

The Cytoplasmic segment spans residues 1-50 (MEQWDHFHNQQEDTDSCSESVKFDARSMTALLPPNPKNSPSLQEKLKSFK). At Ser27 the chain carries Phosphoserine. Residues 51–76 (AALIALYLLVFAVLIPLIGIVAAQLL) traverse the membrane as a helical; Signal-anchor for type II membrane protein segment. Residues 77–109 (KWETKNCSVSSTNANDITQSLTGKGNDSEEEMR) are spacer. The Extracellular portion of the chain corresponds to 77–451 (KWETKNCSVS…SEDAGVTCTL (375 aa)). Asn82, Asn102, Asn143, Asn184, Asn221, Asn249, and Asn267 each carry an N-linked (GlcNAc...) asparagine glycan. A coiled-coil region spans residues 171–255 (NAIDEISKSL…VLNNITNDLR (85 aa)). Residues 267–346 (NITLIQGPPG…EKGSGNTLTP (80 aa)) form a disordered region. The 69-residue stretch at 273 to 341 (GPPGPPGEKG…KGQKGEKGSG (69 aa)) folds into the Collagen-like domain. Residues 350 to 450 (VRLVGGSGPH…HSEDAGVTCT (101 aa)) enclose the SRCR domain. 3 disulfides stabilise this stretch: Cys375–Cys439, Cys388–Cys449, and Cys419–Cys429.

In terms of assembly, homotrimer. Interacts with MYO18A. Isoform I, isoform II and isoform III are expressed in monocyte-derived macrophages. Isoform I and isoform II are expressed in the liver, placenta and brain.

Its subcellular location is the membrane. Membrane glycoproteins implicated in the pathologic deposition of cholesterol in arterial walls during atherogenesis. Two types of receptor subunits exist. These receptors mediate the endocytosis of a diverse group of macromolecules, including modified low density lipoproteins (LDL). Isoform III does not internalize acetylated LDL. This Homo sapiens (Human) protein is Macrophage scavenger receptor types I and II (MSR1).